Consider the following 1008-residue polypeptide: ATP-dependent zinc metalloprotease FTSH 12, chloroplastic (1008 aa).

The transit peptide at 1-49 directs the protein to the chloroplast; sequence MEIAISYKPNPLISSSTQLLKRSKSFGLVRFPAKYGLGATRKKQLFRVY. A run of 2 helical transmembrane segments spans residues 154–174 and 427–447; these read AALF…YVAI and IHYF…LWFI. 533–540 provides a ligand contact to ATP; it reads GPPGTGKT. Position 769 (His-769) interacts with Zn(2+). Glu-770 is a catalytic residue. 2 residues coordinate Zn(2+): His-773 and Asp-849.

The protein in the N-terminal section; belongs to the AAA ATPase family. In the C-terminal section; belongs to the peptidase M41 family. The cofactor is Zn(2+).

The protein resides in the plastid. Its subcellular location is the chloroplast thylakoid membrane. Probable ATP-dependent zinc metallopeptidase. This is ATP-dependent zinc metalloprotease FTSH 12, chloroplastic (FTSH12) from Arabidopsis thaliana (Mouse-ear cress).